The primary structure comprises 219 residues: Ribose-5-phosphate isomerase A (219 aa).

Substrate contacts are provided by residues 28–31, 81–84, and 94–97; these read TGST, DGAD, and KGGG. Glutamate 103 acts as the Proton acceptor in catalysis. Lysine 121 provides a ligand contact to substrate.

The protein belongs to the ribose 5-phosphate isomerase family. Homodimer.

It carries out the reaction aldehydo-D-ribose 5-phosphate = D-ribulose 5-phosphate. It participates in carbohydrate degradation; pentose phosphate pathway; D-ribose 5-phosphate from D-ribulose 5-phosphate (non-oxidative stage): step 1/1. Its function is as follows. Catalyzes the reversible conversion of ribose-5-phosphate to ribulose 5-phosphate. In Photorhabdus laumondii subsp. laumondii (strain DSM 15139 / CIP 105565 / TT01) (Photorhabdus luminescens subsp. laumondii), this protein is Ribose-5-phosphate isomerase A.